We begin with the raw amino-acid sequence, 373 residues long: Phosphoserine aminotransferase (373 aa).

Arginine 41 contributes to the L-glutamate binding site. Pyridoxal 5'-phosphate contacts are provided by residues 75–76 (GT), tryptophan 101, threonine 152, aspartate 172, and glutamine 195. At lysine 196 the chain carries N6-(pyridoxal phosphate)lysine. Pyridoxal 5'-phosphate is bound at residue 236-237 (NT).

Belongs to the class-V pyridoxal-phosphate-dependent aminotransferase family. SerC subfamily. In terms of assembly, homodimer. It depends on pyridoxal 5'-phosphate as a cofactor.

It is found in the cytoplasm. The enzyme catalyses O-phospho-L-serine + 2-oxoglutarate = 3-phosphooxypyruvate + L-glutamate. It catalyses the reaction 4-(phosphooxy)-L-threonine + 2-oxoglutarate = (R)-3-hydroxy-2-oxo-4-phosphooxybutanoate + L-glutamate. Its pathway is amino-acid biosynthesis; L-serine biosynthesis; L-serine from 3-phospho-D-glycerate: step 2/3. Its function is as follows. Catalyzes the reversible conversion of 3-phosphohydroxypyruvate to phosphoserine and of 3-hydroxy-2-oxo-4-phosphonooxybutanoate to phosphohydroxythreonine. The polypeptide is Phosphoserine aminotransferase (Lactobacillus helveticus (strain DPC 4571)).